A 140-amino-acid polypeptide reads, in one-letter code: DegV domain-containing 15.5 kDa protein (140 aa).

Positions 4-140 (QIIVTDSTSD…ELVLLQSKKI (137 aa)) constitute a DegV domain. Residues T61 and S93 each contribute to the hexadecanoate site.

Functionally, may bind long-chain fatty acids, such as palmitate, and may play a role in lipid transport or fatty acid metabolism. The protein is DegV domain-containing 15.5 kDa protein of Staphylococcus aureus.